The primary structure comprises 228 residues: Protein GlxC (228 aa).

Belongs to the FwdC/FmdC family.

This Rhizobium meliloti (strain 1021) (Ensifer meliloti) protein is Protein GlxC (glxC).